Here is a 384-residue protein sequence, read N- to C-terminus: Thylakoid membrane protein TERC, chloroplastic (384 aa).

Residues 1 to 48 (MSLASVIHHGILPPAKSDRIFLTIPVFPPDFRARGWTKSPFSLLINPS) constitute a chloroplast transit peptide. Residues 49-115 (LASAANRRLS…DYQQEETYKT (67 aa)) lie on the Stromal side of the membrane. Residues 68 to 104 (GIDQEDEEKESRELLPHKNDENATTSRSSSSVDSGGL) are disordered. Over residues 76-88 (KESRELLPHKNDE) the composition is skewed to basic and acidic residues. Residues 116-136 (SFKTVALCVGTAVAFGIGIGL) form a helical membrane-spanning segment. The Lumenal, thylakoid segment spans residues 137-145 (KEGVGKASE). A helical transmembrane segment spans residues 146 to 166 (FFAGYILEQSLSVDNLFVFVL). The Stromal portion of the chain corresponds to 167–180 (VFKYFKVPLMYQNK). Residues 181-201 (VLTYGIAGAIVFRFTLILLGT) traverse the membrane as a helical segment. The Lumenal, thylakoid segment spans residues 202–206 (ATLQK). Residues 207-227 (FEAVNLLLAAVLLYSSFKLFA) form a helical membrane-spanning segment. The Stromal portion of the chain corresponds to 228–275 (SEEDDTDLSDNFIVKTCQRFIPVTSSYDGNRFFTKHDGILKATPLLLT). Residues 276-296 (VAVIELSDIAFAVDSIPAVFG) form a helical membrane-spanning segment. Over 297–301 (VTRDP) the chain is Lumenal, thylakoid. A helical membrane pass occupies residues 302–322 (FIVLTSNLFAILGLRSLYTLI). Topologically, residues 323–335 (SEGMDELEYLQPS) are stromal. The helical transmembrane segment at 336-356 (IAVVLGFIGVKMILDFFGFHI) threads the bilayer. Ser-357 is a topological domain (lumenal, thylakoid). The helical transmembrane segment at 358–378 (TEASLGVVALSLSTGVLLSLT) threads the bilayer. The Stromal segment spans residues 379–384 (NKSSDS).

As to quaternary structure, interacts with ALB3. As to expression, expressed in roots, rosette and cauline leaves, stems and flowers.

It is found in the plastid. The protein localises to the chloroplast thylakoid membrane. Integral thylakoid membrane protein that plays a crucial role in thylakoid membrane biogenesis and thylakoid formation in early chloroplast development. Is essential for de novo synthesis of photosystem II (PSII) core proteins and required for efficient insertion of thylakoid membrane proteins, presumably via interaction with ALB3. May assist synthesis of thylakoid membrane proteins at the membrane insertion step. This is Thylakoid membrane protein TERC, chloroplastic from Arabidopsis thaliana (Mouse-ear cress).